We begin with the raw amino-acid sequence, 377 residues long: Succinyl-diaminopimelate desuccinylase (377 aa).

Histidine 67 contacts Zn(2+). The active site involves aspartate 69. A Zn(2+)-binding site is contributed by aspartate 100. The Proton acceptor role is filled by glutamate 134. Zn(2+)-binding residues include glutamate 135, glutamate 163, and histidine 349.

Belongs to the peptidase M20A family. DapE subfamily. Homodimer. The cofactor is Zn(2+). Requires Co(2+) as cofactor.

It catalyses the reaction N-succinyl-(2S,6S)-2,6-diaminopimelate + H2O = (2S,6S)-2,6-diaminopimelate + succinate. It functions in the pathway amino-acid biosynthesis; L-lysine biosynthesis via DAP pathway; LL-2,6-diaminopimelate from (S)-tetrahydrodipicolinate (succinylase route): step 3/3. In terms of biological role, catalyzes the hydrolysis of N-succinyl-L,L-diaminopimelic acid (SDAP), forming succinate and LL-2,6-diaminopimelate (DAP), an intermediate involved in the bacterial biosynthesis of lysine and meso-diaminopimelic acid, an essential component of bacterial cell walls. This is Succinyl-diaminopimelate desuccinylase from Dechloromonas aromatica (strain RCB).